Consider the following 349-residue polypeptide: 6-phosphogluconolactonase (349 aa).

Residues 125 to 151 (LQSPVSEAAHTGKGPHERQEKPHTHYA) form a disordered region. Over residues 138 to 147 (GPHERQEKPH) the composition is skewed to basic and acidic residues.

It belongs to the cycloisomerase 2 family.

It carries out the reaction 6-phospho-D-glucono-1,5-lactone + H2O = 6-phospho-D-gluconate + H(+). It functions in the pathway carbohydrate degradation; pentose phosphate pathway; D-ribulose 5-phosphate from D-glucose 6-phosphate (oxidative stage): step 2/3. Catalyzes the hydrolysis of 6-phosphogluconolactone to 6-phosphogluconate. This chain is 6-phosphogluconolactonase (pgl), found in Bacillus subtilis (strain 168).